The primary structure comprises 443 residues: Cyclin-A2-1 (443 aa).

Over residues 1–10 (MHRASSKHTN) the composition is skewed to basic residues. The interval 1-61 (MHRASSKHTN…KRVARPSNKR (61 aa)) is disordered. A compositionally biased stretch (basic and acidic residues) spans 11 to 25 (AKKEAISTSKIRDNN).

The protein belongs to the cyclin family. Cyclin AB subfamily. Expressed in tissues with active cell division: apical root and shoot meristems, lateral root and leaf primordia, floral meristems and developing pollen.

In terms of biological role, may negatively regulate endocycles and act as a regulator of ploidy levels in endoreduplication. The protein is Cyclin-A2-1 (CYCA2-1) of Arabidopsis thaliana (Mouse-ear cress).